Consider the following 461-residue polypeptide: ATP synthase subunit beta (461 aa).

An ATP-binding site is contributed by 151 to 158 (GGAGVGKT).

It belongs to the ATPase alpha/beta chains family. F-type ATPases have 2 components, CF(1) - the catalytic core - and CF(0) - the membrane proton channel. CF(1) has five subunits: alpha(3), beta(3), gamma(1), delta(1), epsilon(1). CF(0) has three main subunits: a(1), b(2) and c(9-12). The alpha and beta chains form an alternating ring which encloses part of the gamma chain. CF(1) is attached to CF(0) by a central stalk formed by the gamma and epsilon chains, while a peripheral stalk is formed by the delta and b chains.

Its subcellular location is the cell inner membrane. It catalyses the reaction ATP + H2O + 4 H(+)(in) = ADP + phosphate + 5 H(+)(out). Produces ATP from ADP in the presence of a proton gradient across the membrane. The catalytic sites are hosted primarily by the beta subunits. The protein is ATP synthase subunit beta of Coxiella burnetii (strain RSA 331 / Henzerling II).